Reading from the N-terminus, the 241-residue chain is Probable porphobilinogen deaminase (241 aa).

It belongs to the HMBS family.

The enzyme catalyses 4 porphobilinogen + H2O = hydroxymethylbilane + 4 NH4(+). It participates in porphyrin-containing compound metabolism; protoporphyrin-IX biosynthesis; coproporphyrinogen-III from 5-aminolevulinate: step 2/4. Its function is as follows. Tetrapolymerization of the monopyrrole PBG into the hydroxymethylbilane pre-uroporphyrinogen in several discrete steps. The chain is Probable porphobilinogen deaminase (hemC) from Chlamydia trachomatis serovar D (strain ATCC VR-885 / DSM 19411 / UW-3/Cx).